The chain runs to 319 residues: Olfactory receptor 8K1 (319 aa).

The Extracellular portion of the chain corresponds to 1-31; it reads MNHVVKHNHTAVTKVTEFILMGITDNPGLQA. Asn-8 carries an N-linked (GlcNAc...) asparagine glycan. Residues 32 to 52 traverse the membrane as a helical segment; sequence PLFGLFLIIYLVTVIGNLGMV. The Cytoplasmic segment spans residues 53 to 60; that stretch reads ILTYLDSK. Residues 61-81 form a helical membrane-spanning segment; it reads LHTPMYFFLRHLSITDLGYST. At 82–105 the chain is on the extracellular side; it reads VIAPKMLVNFIVHKNTISYNWYAT. Residues 106-126 traverse the membrane as a helical segment; the sequence is QLAFFEIFIISELFILSAMAY. Over 127–145 the chain is Cytoplasmic; it reads DRYVAICKPLLYVIIMAEK. The chain crosses the membrane as a helical span at residues 146-166; sequence VLWVLVIVPYLYSTFVSLFLT. Over 167-203 the chain is Extracellular; it reads IKLFKLSFCGSNIISYFYCDCIPLMSILCSDTNELEL. Residues 204–223 traverse the membrane as a helical segment; that stretch reads IILIFSGCNLLFSLSIVLIS. Residues 224–243 are Cytoplasmic-facing; it reads YMFILVAILRMNSRKGRYKA. Residues 244-264 traverse the membrane as a helical segment; that stretch reads FSTCSSHLTVVIMFYGTLLFI. Over 265-277 the chain is Extracellular; sequence YLQPKSSHTLAID. The chain crosses the membrane as a helical span at residues 278-298; it reads KMASVFYTLLIPMLNPLIYSL. Topologically, residues 299–319 are cytoplasmic; the sequence is RNKEVKDALKRTLTNRFKIPI.

Belongs to the G-protein coupled receptor 1 family.

The protein localises to the cell membrane. Its function is as follows. Odorant receptor. The protein is Olfactory receptor 8K1 (OR8K1) of Homo sapiens (Human).